Reading from the N-terminus, the 695-residue chain is Elongation factor G (695 aa).

The tr-type G domain maps to 10–289; that stretch reads KNLRNIGIMA…AVVAWMPSPL (280 aa). Residues 19–26, 83–87, and 137–140 contribute to the GTP site; these read AHIDAGKT, DTPGH, and NKMD.

The protein belongs to the TRAFAC class translation factor GTPase superfamily. Classic translation factor GTPase family. EF-G/EF-2 subfamily.

Its subcellular location is the cytoplasm. In terms of biological role, catalyzes the GTP-dependent ribosomal translocation step during translation elongation. During this step, the ribosome changes from the pre-translocational (PRE) to the post-translocational (POST) state as the newly formed A-site-bound peptidyl-tRNA and P-site-bound deacylated tRNA move to the P and E sites, respectively. Catalyzes the coordinated movement of the two tRNA molecules, the mRNA and conformational changes in the ribosome. The sequence is that of Elongation factor G from Protochlamydia amoebophila (strain UWE25).